The following is a 381-amino-acid chain: E3 ubiquitin-protein ligase KCMF1 (381 aa).

Serine 2 is subject to N-acetylserine. Phosphoserine is present on serine 2. The ZZ-type zinc finger occupies 4-60; that stretch reads HEGVSCDACLKGNFRGRRYKCLICYDYDLCASCYESGATTTRHTTDHPMQCILTRVD. Zn(2+) contacts are provided by cysteine 9, cysteine 12, cysteine 24, cysteine 27, cysteine 33, cysteine 36, histidine 46, and histidine 50. Residues 78–101 form a C2H2-type zinc finger; sequence FTCPYCGKMGYTETSLQEHVTSEH. The disordered stretch occupies residues 154–193; it reads MFHPGRGLGGPRARRSNMHFTSSSTGGLSSSQSSYSPSNR. Phosphoserine is present on residues serine 169, serine 189, and serine 212. The span at 175 to 191 shows a compositional bias: low complexity; sequence SSSTGGLSSSQSSYSPS. Positions 225-257 form a coiled coil; that stretch reads SQLQQLQMQLQLERQHAQAARQQLETARNATRR. The tract at residues 294–314 is disordered; the sequence is TRLNDPKMSETERQSMESERA. Residues 297-314 are compositionally biased toward basic and acidic residues; that stretch reads NDPKMSETERQSMESERA. 2 positions are modified to phosphoserine: serine 335 and serine 336.

Belongs to the KCMF1 family. As to quaternary structure, component of the SIFI complex, composed of KCMF1, UBR4 and calmodulin (CALM1, CALM2 or CALM3). Spleen, small intestine, ovary, peripheral blood, lung, kidney and pancreas. Expressed at low levels in the thymus, prostate, testis, colon, heart, brain, placenta and liver.

The protein localises to the cytoplasm. It is found in the late endosome. Its subcellular location is the lysosome. The catalysed reaction is S-ubiquitinyl-[E2 ubiquitin-conjugating enzyme]-L-cysteine + [acceptor protein]-L-lysine = [E2 ubiquitin-conjugating enzyme]-L-cysteine + N(6)-ubiquitinyl-[acceptor protein]-L-lysine.. The protein operates within protein modification; protein ubiquitination. E3 ubiquitin-protein ligase which accepts ubiquitin from an E2 ubiquitin-conjugating enzyme and then transfers it to targeted substrates, promoting their degradation by the proteasome. Together with UBR4, component of the N-end rule pathway: ubiquitinates proteins bearing specific N-terminal residues that are destabilizing according to the N-end rule, leading to their degradation. Does not ubiquitinate proteins that are acetylated at the N-terminus. Together with UBR4, part of a protein quality control pathway that catalyzes ubiquitination and degradation of proteins that have been oxidized in response to reactive oxygen species (ROS): recognizes proteins with an Arg-CysO3(H) degron at the N-terminus, and mediates assembly of heterotypic 'Lys-63'-/'Lys-27'-linked branched ubiquitin chains on oxidized proteins, leading to their degradation by autophagy. Catalytic component of the SIFI complex, a multiprotein complex required to inhibit the mitochondrial stress response after a specific stress event has been resolved: ubiquitinates and degrades (1) components of the HRI-mediated signaling of the integrated stress response, such as DELE1 and EIF2AK1/HRI, as well as (2) unimported mitochondrial precursors. Within the SIFI complex, UBR4 initiates ubiquitin chain that are further elongated or branched by KCMF1. This chain is E3 ubiquitin-protein ligase KCMF1, found in Homo sapiens (Human).